A 386-amino-acid chain; its full sequence is Succinate--CoA ligase [ADP-forming] subunit beta (386 aa).

The ATP-grasp domain occupies 9–244; it reads KELLRSYGVP…ETEEDPREVE (236 aa). ATP-binding positions include K46, 53 to 55, E99, C102, and E107; that span reads GRG. Mg(2+) is bound by residues N199 and D213. Substrate contacts are provided by residues N264 and 321-323; that span reads GIM.

The protein belongs to the succinate/malate CoA ligase beta subunit family. In terms of assembly, heterotetramer of two alpha and two beta subunits. Mg(2+) serves as cofactor.

The enzyme catalyses succinate + ATP + CoA = succinyl-CoA + ADP + phosphate. The catalysed reaction is GTP + succinate + CoA = succinyl-CoA + GDP + phosphate. It participates in carbohydrate metabolism; tricarboxylic acid cycle; succinate from succinyl-CoA (ligase route): step 1/1. Succinyl-CoA synthetase functions in the citric acid cycle (TCA), coupling the hydrolysis of succinyl-CoA to the synthesis of either ATP or GTP and thus represents the only step of substrate-level phosphorylation in the TCA. The beta subunit provides nucleotide specificity of the enzyme and binds the substrate succinate, while the binding sites for coenzyme A and phosphate are found in the alpha subunit. The chain is Succinate--CoA ligase [ADP-forming] subunit beta from Exiguobacterium sibiricum (strain DSM 17290 / CCUG 55495 / CIP 109462 / JCM 13490 / 255-15).